The primary structure comprises 638 residues: LIM domain kinase 2 (638 aa).

LIM zinc-binding domains lie at 12–63 (CRGC…CHKD) and 72–124 (CHGC…CGKC). The region spanning 152 to 239 (LISMPATTEC…TLQLLIEHDP (88 aa)) is the PDZ domain. Threonine 210 is subject to Phosphothreonine. Residues 257–266 (MQSSGHTLML) show a composition bias toward polar residues. Residues 257–304 (MQSSGHTLMLSTLDAKENQEGTLRRRSLRRSNSISKSPGPSSPKEPLL) are disordered. Basic and acidic residues predominate over residues 270 to 279 (DAKENQEGTL). Residues 286-304 (RSNSISKSPGPSSPKEPLL) are compositionally biased toward low complexity. Residues serine 293 and serine 298 each carry the phosphoserine modification. In terms of domain architecture, Protein kinase spans 331–608 (LIHGEVLGKG…DSFEALSLFL (278 aa)). ATP-binding positions include 337 to 345 (LGKGFFGQA) and lysine 360. Aspartate 451 is a catalytic residue. A Phosphothreonine; by ROCK1 and CDC42BP modification is found at threonine 505.

It belongs to the protein kinase superfamily. TKL Ser/Thr protein kinase family. Binds ROCK1 and MARF1. Interacts with NISCH. Post-translationally, phosphorylated on serine and/or threonine residues by ROCK1. In terms of tissue distribution, found in various tissues at moderate levels, except for testis, which shows very low expression.

The protein resides in the cytoplasm. It is found in the nucleus. The protein localises to the perinuclear region. It localises to the cytoskeleton. Its subcellular location is the spindle. The protein resides in the microtubule organizing center. It is found in the centrosome. It carries out the reaction L-seryl-[protein] + ATP = O-phospho-L-seryl-[protein] + ADP + H(+). The enzyme catalyses L-threonyl-[protein] + ATP = O-phospho-L-threonyl-[protein] + ADP + H(+). In terms of biological role, serine/threonine-protein kinase that plays an essential role in the regulation of actin filament dynamics. Acts downstream of several Rho family GTPase signal transduction pathways. Involved in astral microtubule organization and mitotic spindle orientation during early stages of mitosis by mediating phosphorylation of TPPP. Displays serine/threonine-specific phosphorylation of myelin basic protein and histone (MBP) in vitro. Suppresses ciliogenesis via multiple pathways; phosphorylation of CFL1, directional trafficking of ciliary vesicles to the ciliary base, and by facilitating YAP1 nuclear localization where it acts as a transcriptional corepressor of the TEAD4 target genes AURKA and PLK1. In Rattus norvegicus (Rat), this protein is LIM domain kinase 2 (Limk2).